Reading from the N-terminus, the 468-residue chain is uncharacterized protein (468 aa).

The segment at 447 to 468 is disordered; the sequence is AVHVSNGDKPKVALPDTQLGSH.

The protein belongs to the mycobacterial PPE family.

This is an uncharacterized protein from Mycobacterium tuberculosis (strain ATCC 25618 / H37Rv).